We begin with the raw amino-acid sequence, 340 residues long: Probable protein phosphatase 2C 21 (340 aa).

A disordered region spans residues 1–21 (MGASPSRPLEQSPSSSEGENH). Positions 24 to 305 (KYASYTTQGF…DNATAILVKF (282 aa)) constitute a PPM-type phosphatase domain. The Mn(2+) site is built by Asp-58, Gly-59, Asp-254, and Asp-296. The tract at residues 311 to 340 (DPDEVASARDEHQHNPEGGDEKLDINNDND) is disordered. Basic and acidic residues predominate over residues 316–340 (ASARDEHQHNPEGGDEKLDINNDND).

This sequence belongs to the PP2C family. The cofactor is Mg(2+). Requires Mn(2+) as cofactor.

The enzyme catalyses O-phospho-L-seryl-[protein] + H2O = L-seryl-[protein] + phosphate. The catalysed reaction is O-phospho-L-threonyl-[protein] + H2O = L-threonyl-[protein] + phosphate. This chain is Probable protein phosphatase 2C 21, found in Oryza sativa subsp. japonica (Rice).